The following is a 464-amino-acid chain: Calcitonin gene-related peptide type 1 receptor (464 aa).

An N-terminal signal peptide occupies residues 1-23 (MMDKKCTLCFLFLLLLNMALIAA). At 24 to 139 (ESEEGANQTD…STHEKVKTAL (116 aa)) the chain is on the extracellular side. Asparagine 30, asparagine 66, asparagine 118, asparagine 123, asparagine 128, and asparagine 129 each carry an N-linked (GlcNAc...) asparagine glycan. 3 cysteine pairs are disulfide-bonded: cysteine 48/cysteine 74, cysteine 65/cysteine 105, and cysteine 88/cysteine 127. A helical membrane pass occupies residues 140-164 (NLFYLTIIGHGLSIASLIISLIIFF). Residues 165–175 (YFKSLSCQRIT) are Cytoplasmic-facing. The helical transmembrane segment at 176-198 (LHKNLFFSFVCNSIVTIIHLTAV) threads the bilayer. The Extracellular segment spans residues 199-209 (ANNQALVATNP). The helical transmembrane segment at 210–238 (VSCKVSQFIHLYLMGCNYFWMLCEGIYLH) threads the bilayer. Residues 239-252 (TLIVVAVFAEKQHL) are Cytoplasmic-facing. The helical transmembrane segment at 253–273 (MWYYFLGWGFPLLPACIHAIA) threads the bilayer. At 274-289 (RSLYYNDNCWISSDTH) the chain is on the extracellular side. Residues 288-289 (TH) are required for RAMP3 interaction. A helical transmembrane segment spans residues 290-314 (LLYIIHGPICAALLVNLFFLLNIVR). Over 315–329 (VLITKLKVTHQAESN) the chain is Cytoplasmic. A helical transmembrane segment spans residues 330–351 (LYMKAVRATLILVPLLGIEFVL). Residues 352–366 (FPWRPEGKVAEEVYD) lie on the Extracellular side of the membrane. Residues 367–387 (YVMHILMHYQGLLVSTIFCFF) form a helical membrane-spanning segment. The Cytoplasmic portion of the chain corresponds to 388–464 (NGEVQAILRR…KPEKMYDLVM (77 aa)). Serine 420 and serine 445 each carry phosphoserine.

This sequence belongs to the G-protein coupled receptor 2 family. As to quaternary structure, heterodimer of CALCRL and RAMP1; the receptor complex functions as CGRP receptor. Heterodimer of CALCRL and RAMP2 or CALCRL and RAMP3; the complexes function as adrenomedullin receptor.

Its subcellular location is the cell membrane. G protein-coupled receptor which specificity is determined by its interaction with receptor-activity-modifying proteins (RAMPs). Together with RAMP1, form the receptor complex for calcitonin-gene-related peptides CALCA/CGRP1 and CALCB/CGRP2. Together with RAMP2 or RAMP3, function as receptor complexes for adrenomedullin (ADM and ADM2). Ligand binding causes a conformation change that triggers signaling via guanine nucleotide-binding proteins (G proteins) and modulates the activity of downstream effectors. Activates cAMP-dependent pathway. The polypeptide is Calcitonin gene-related peptide type 1 receptor (Rattus norvegicus (Rat)).